Reading from the N-terminus, the 76-residue chain is Small ribosomal subunit protein bS18 (76 aa).

This sequence belongs to the bacterial ribosomal protein bS18 family. In terms of assembly, part of the 30S ribosomal subunit. Forms a tight heterodimer with protein bS6.

Its function is as follows. Binds as a heterodimer with protein bS6 to the central domain of the 16S rRNA, where it helps stabilize the platform of the 30S subunit. The polypeptide is Small ribosomal subunit protein bS18 (Xylella fastidiosa (strain 9a5c)).